The chain runs to 156 residues: Flagellar assembly factor FliW (156 aa).

Belongs to the FliW family. As to quaternary structure, interacts with translational regulator CsrA and flagellin(s).

It is found in the cytoplasm. In terms of biological role, acts as an anti-CsrA protein, binds CsrA and prevents it from repressing translation of its target genes, one of which is flagellin. Binds to flagellin and participates in the assembly of the flagellum. The polypeptide is Flagellar assembly factor FliW (Syntrophomonas wolfei subsp. wolfei (strain DSM 2245B / Goettingen)).